The chain runs to 316 residues: MYSKILATGSYLPKQVRSNADLEKMVDTTDEWIFTRSGMKERRIAAADETVATMGAAAAHKACEMAAIDVNEIELIVVATTTHSHAYPSAACQIQGMLAIEDAIAFDVAAACTGFIYALSVADQFIRAGKVKTAFVVGADVNSRVLDEADRGTVVLFGDGAGAVILQASEQAGILSTHLHSSADTDNMLALPIQERGNAQSGFIQMQGNATFKLAVSRLANVVEETLQANNLQKADLDWLVPHQANIRIIAATAKKLEMEMSQVVLTVEKYGNNSAATVPVALDEAVRDGRIQRGQLLLLEAFGGGWTWGSGLVRF.

Active-site residues include cysteine 112 and histidine 243. The interval 244–248 (QANIR) is ACP-binding. Residue asparagine 273 is part of the active site.

This sequence belongs to the thiolase-like superfamily. FabH family. As to quaternary structure, homodimer.

The protein localises to the cytoplasm. It catalyses the reaction malonyl-[ACP] + acetyl-CoA + H(+) = 3-oxobutanoyl-[ACP] + CO2 + CoA. The protein operates within lipid metabolism; fatty acid biosynthesis. Its function is as follows. Catalyzes the condensation reaction of fatty acid synthesis by the addition to an acyl acceptor of two carbons from malonyl-ACP. Catalyzes the first condensation reaction which initiates fatty acid synthesis and may therefore play a role in governing the total rate of fatty acid production. Possesses both acetoacetyl-ACP synthase and acetyl transacylase activities. Its substrate specificity determines the biosynthesis of branched-chain and/or straight-chain of fatty acids. The protein is Beta-ketoacyl-[acyl-carrier-protein] synthase III of Haemophilus ducreyi (strain 35000HP / ATCC 700724).